Here is a 312-residue protein sequence, read N- to C-terminus: MPFCLTETSLPFGKKYKGKVRDTYDLGDQLILVTTDRQSAFDRCLAAVPYKGQVLNLTSVWWFKNTQSIVPNHLIAVPDPNVAIAKKCKIFPIEFVVRGYISGSTSTSLWTQYQKGVREYCGITFPDGLRKNQKLESPVITPTTKETLHDRPISPHEIVAEGWMTQEDWDETSSYALKLFQHGMEVAQQHGLILVDTKYEFGRDAEGRIVLVDEIHTPDSSRYWLFNGYQERFDAGKEPENIDKEFLRLWFVDHCDPYKDEVLPQAPQELIVTLASRYIQLYEMITGESFVYDSNPGPVNDRILHNIQRWLG.

The protein belongs to the SAICAR synthetase family.

The catalysed reaction is 5-amino-1-(5-phospho-D-ribosyl)imidazole-4-carboxylate + L-aspartate + ATP = (2S)-2-[5-amino-1-(5-phospho-beta-D-ribosyl)imidazole-4-carboxamido]succinate + ADP + phosphate + 2 H(+). It participates in purine metabolism; IMP biosynthesis via de novo pathway; 5-amino-1-(5-phospho-D-ribosyl)imidazole-4-carboxamide from 5-amino-1-(5-phospho-D-ribosyl)imidazole-4-carboxylate: step 1/2. This Legionella pneumophila (strain Paris) protein is Phosphoribosylaminoimidazole-succinocarboxamide synthase.